The sequence spans 572 residues: Glypican-5 (572 aa).

A signal peptide spans 1–24 (MDAQTWPVGFRCLLLLALVGSARS). 2 N-linked (GlcNAc...) asparagine glycosylation sites follow: N120 and N237. The disordered stretch occupies residues 355-375 (SPRCSFDQSKEKHGMKTTTRN). O-linked (Xyl...) (glycosaminoglycan) serine glycans are attached at residues S441, S486, S495, S507, and S509. Residue N527 is glycosylated (N-linked (GlcNAc...) asparagine).

The protein belongs to the glypican family. In terms of tissue distribution, in adult, primarily expressed in the brain. Also detected in fetal brain, lung and liver.

The protein localises to the cell membrane. It is found in the secreted. The protein resides in the extracellular space. In terms of biological role, cell surface proteoglycan that bears heparan sulfate. The polypeptide is Glypican-5 (GPC5) (Homo sapiens (Human)).